Reading from the N-terminus, the 346-residue chain is tRNA N6-adenosine threonylcarbamoyltransferase (346 aa).

Fe cation contacts are provided by His111 and His115. Residues 134-138, Asp167, Gly180, and Asn279 each bind substrate; that span reads LVSGG. Fe cation is bound at residue Asp307.

The protein belongs to the KAE1 / TsaD family. Fe(2+) is required as a cofactor.

The protein resides in the cytoplasm. It catalyses the reaction L-threonylcarbamoyladenylate + adenosine(37) in tRNA = N(6)-L-threonylcarbamoyladenosine(37) in tRNA + AMP + H(+). Required for the formation of a threonylcarbamoyl group on adenosine at position 37 (t(6)A37) in tRNAs that read codons beginning with adenine. Is involved in the transfer of the threonylcarbamoyl moiety of threonylcarbamoyl-AMP (TC-AMP) to the N6 group of A37, together with TsaE and TsaB. TsaD likely plays a direct catalytic role in this reaction. This is tRNA N6-adenosine threonylcarbamoyltransferase from Burkholderia thailandensis (strain ATCC 700388 / DSM 13276 / CCUG 48851 / CIP 106301 / E264).